A 340-amino-acid chain; its full sequence is tRNA N6-adenosine threonylcarbamoyltransferase (340 aa).

Residues His-111 and His-115 each contribute to the Fe cation site. Substrate contacts are provided by residues 134–138, Asp-167, Gly-180, and Asn-276; that span reads LVSGG. Position 304 (Asp-304) interacts with Fe cation.

It belongs to the KAE1 / TsaD family. The cofactor is Fe(2+).

The protein resides in the cytoplasm. It catalyses the reaction L-threonylcarbamoyladenylate + adenosine(37) in tRNA = N(6)-L-threonylcarbamoyladenosine(37) in tRNA + AMP + H(+). Required for the formation of a threonylcarbamoyl group on adenosine at position 37 (t(6)A37) in tRNAs that read codons beginning with adenine. Is involved in the transfer of the threonylcarbamoyl moiety of threonylcarbamoyl-AMP (TC-AMP) to the N6 group of A37, together with TsaE and TsaB. TsaD likely plays a direct catalytic role in this reaction. The sequence is that of tRNA N6-adenosine threonylcarbamoyltransferase from Helicobacter pylori (strain P12).